We begin with the raw amino-acid sequence, 469 residues long: 3-isopropylmalate dehydratase large subunit (469 aa).

3 residues coordinate [4Fe-4S] cluster: Cys350, Cys410, and Cys413.

It belongs to the aconitase/IPM isomerase family. LeuC type 1 subfamily. As to quaternary structure, heterodimer of LeuC and LeuD. It depends on [4Fe-4S] cluster as a cofactor.

It catalyses the reaction (2R,3S)-3-isopropylmalate = (2S)-2-isopropylmalate. It participates in amino-acid biosynthesis; L-leucine biosynthesis; L-leucine from 3-methyl-2-oxobutanoate: step 2/4. Catalyzes the isomerization between 2-isopropylmalate and 3-isopropylmalate, via the formation of 2-isopropylmaleate. The polypeptide is 3-isopropylmalate dehydratase large subunit (Rhizobium etli (strain ATCC 51251 / DSM 11541 / JCM 21823 / NBRC 15573 / CFN 42)).